We begin with the raw amino-acid sequence, 259 residues long: Zinc import ATP-binding protein ZnuC (259 aa).

The 217-residue stretch at valine 22 to histidine 238 folds into the ABC transporter domain. An ATP-binding site is contributed by glycine 54–serine 61.

Belongs to the ABC transporter superfamily. Zinc importer (TC 3.A.1.15.5) family. The complex is composed of two ATP-binding proteins (ZnuC), two transmembrane proteins (ZnuB) and a solute-binding protein (ZnuA).

It localises to the cell inner membrane. The catalysed reaction is Zn(2+)(out) + ATP(in) + H2O(in) = Zn(2+)(in) + ADP(in) + phosphate(in) + H(+)(in). In terms of biological role, part of the ABC transporter complex ZnuABC involved in zinc import. Responsible for energy coupling to the transport system. The chain is Zinc import ATP-binding protein ZnuC from Alkalilimnicola ehrlichii (strain ATCC BAA-1101 / DSM 17681 / MLHE-1).